A 1860-amino-acid polypeptide reads, in one-letter code: Proprotein convertase subtilisin/kexin type 5 (1860 aa).

The signal sequence occupies residues 1-32; it reads MGWGSRCCCPGRLDLLCVLALLGGCLLPVCRT. Positions 33–114 are excised as a propeptide; sequence RVYTNHWAVK…QQVVKKRTKR (82 aa). Residues 115–1743 are Extracellular-facing; sequence DYDFSRAQST…VRPATEHFKT (1629 aa). Residues 134–453 form the Peptidase S8 domain; that stretch reads MWYMHCSDNT…FGLMDAEAMV (320 aa). Residues D171 and H212 each act as charge relay system in the active site. N-linked (GlcNAc...) asparagine glycans are attached at residues N225 and N381. Residue S386 is the Charge relay system of the active site. Positions 461–601 constitute a P/Homo B domain; it reads TVPRQHVCVE…SLVLYGTSVQ (141 aa). Residues 519-521 carry the Cell attachment site motif; it reads RGD. 22 FU repeats span residues 630-680, 683-730, 734-777, 779-824, 832-879, 882-927, 929-979, 982-1028, 1032-1077, 1079-1121, 1125-1168, 1177-1221, 1225-1272, 1274-1318, 1320-1363, 1365-1411, 1415-1461, 1465-1510, 1514-1559, 1563-1610, 1614-1659, and 1665-1712; these read EDYA…GHYH, KKRC…GSYQ, KNLC…GRYF, GQDC…SYYF, YKSC…GEYV, HGHC…WKFE, ENQC…GHYA, GNTC…GEVQ, YEEC…KTYS, EVEC…GFYG, MGEC…KTQE, LRKL…GTWP, SGSC…GSYA, DGIC…RHVA, KGVC…GFYA, SRHC…GTYY, TKEC…SEYW, APGC…GYYA, SNRC…GYYA, TGRC…HYYV, TQTC…GEYR, and KFNC…SDPP. The interval 636-1727 is CRM (Cys-rich motif); that stretch reads CDPECSEVGC…CDCQDTTDEC (1092 aa). N665 is a glycosylation site (N-linked (GlcNAc...) asparagine). N-linked (GlcNAc...) asparagine glycosylation is found at N752, N802, and N852. A PLAC domain is found at 869-913; it reads MGAICKDGEYVDEHGHCQTCEASCAKCQGPTQEDCTTCPMTRIFD. N1014 carries an N-linked (GlcNAc...) asparagine glycan. N1191 carries an N-linked (GlcNAc...) asparagine glycan. N1290 carries an N-linked (GlcNAc...) asparagine glycan. N1497 carries an N-linked (GlcNAc...) asparagine glycan. N1685 and N1707 each carry an N-linked (GlcNAc...) asparagine glycan. A helical transmembrane segment spans residues 1744–1764; the sequence is ALFITSSMMLVLLLGAAVVVW. Residues 1765-1860 lie on the Cytoplasmic side of the membrane; sequence KKSRGRVQPA…YDDESYSYYQ (96 aa). AC stretches follow at residues 1807 to 1826 and 1838 to 1860; these read VIEY…IVYM and YGLL…SYYQ.

This sequence belongs to the peptidase S8 family. Expressed in T-lymphocytes.

Its subcellular location is the secreted. It is found in the endomembrane system. Functionally, serine endoprotease that processes various proproteins by cleavage at paired basic amino acids, recognizing the RXXX[KR]R consensus motif. Likely functions in the constitutive and regulated secretory pathways. Plays an essential role in pregnancy establishment by proteolytic activation of a number of important factors such as BMP2, CALD1 and alpha-integrins. This chain is Proprotein convertase subtilisin/kexin type 5 (PCSK5), found in Homo sapiens (Human).